A 115-amino-acid chain; its full sequence is Large ribosomal subunit protein bL19 (115 aa).

The protein belongs to the bacterial ribosomal protein bL19 family.

Its function is as follows. This protein is located at the 30S-50S ribosomal subunit interface and may play a role in the structure and function of the aminoacyl-tRNA binding site. This chain is Large ribosomal subunit protein bL19, found in Bacillus licheniformis (strain ATCC 14580 / DSM 13 / JCM 2505 / CCUG 7422 / NBRC 12200 / NCIMB 9375 / NCTC 10341 / NRRL NRS-1264 / Gibson 46).